We begin with the raw amino-acid sequence, 71 residues long: SPbeta prophage-derived uncharacterized protein YopF (71 aa).

The polypeptide is SPbeta prophage-derived uncharacterized protein YopF (yopF) (Bacillus subtilis (strain 168)).